Here is a 492-residue protein sequence, read N- to C-terminus: 5-taurinomethyluridine-[tRNA] synthase subunit GTPB3, mitochondrial (492 aa).

The N-terminal 20 residues, methionine 1–cysteine 20, are a transit peptide targeting the mitochondrion. The 5,10-methylenetetrahydrofolate site is built by arginine 52, glutamate 112, and lysine 152. A TrmE-type G domain is found at glycine 249–alanine 416. GTP-binding positions include glycine 256–serine 263, glycine 282–aspartate 286, aspartate 303–glycine 306, asparagine 374–aspartate 377, and serine 397–leucine 399. Asparagine 259 is a binding site for K(+). The Mg(2+) site is built by serine 263 and threonine 284. Lysine 492 is a 5,10-methylenetetrahydrofolate binding site.

Belongs to the TRAFAC class TrmE-Era-EngA-EngB-Septin-like GTPase superfamily. TrmE GTPase family. As to quaternary structure, homodimer; forms a dimer in the presence of potassium. Interacts with MTO1; forms the GTPBP3-MTO1 complex composed of homodimers of GTPBP3 and MTO1. Homodimer, forms homodimer in vivo. K(+) serves as cofactor. In terms of tissue distribution, ubiquitously expressed.

Its subcellular location is the mitochondrion. The protein resides in the cytoplasm. The catalysed reaction is GTP + H2O = GDP + phosphate + H(+). Its function is as follows. GTPase component of the GTPBP3-MTO1 complex that catalyzes the 5-taurinomethyluridine (taum(5)U) modification at the 34th wobble position (U34) of mitochondrial tRNAs (mt-tRNAs), which plays a role in mt-tRNA decoding and mitochondrial translation. Taum(5)U formation on mammalian mt-tRNA requires the presence of both GTPBP3-mediated GTPase activity and MTO1 catalytic activity. The protein is 5-taurinomethyluridine-[tRNA] synthase subunit GTPB3, mitochondrial of Homo sapiens (Human).